We begin with the raw amino-acid sequence, 209 residues long: Ribosomal RNA large subunit methyltransferase E (209 aa).

Gly63, Trp65, Asp83, Asp99, and Asp124 together coordinate S-adenosyl-L-methionine. Lys164 functions as the Proton acceptor in the catalytic mechanism.

The protein belongs to the class I-like SAM-binding methyltransferase superfamily. RNA methyltransferase RlmE family.

It is found in the cytoplasm. The catalysed reaction is uridine(2552) in 23S rRNA + S-adenosyl-L-methionine = 2'-O-methyluridine(2552) in 23S rRNA + S-adenosyl-L-homocysteine + H(+). Functionally, specifically methylates the uridine in position 2552 of 23S rRNA at the 2'-O position of the ribose in the fully assembled 50S ribosomal subunit. The polypeptide is Ribosomal RNA large subunit methyltransferase E (Shewanella baltica (strain OS223)).